Reading from the N-terminus, the 305-residue chain is Probable 5-dehydro-4-deoxyglucarate dehydratase (305 aa).

The protein belongs to the DapA family.

The enzyme catalyses 5-dehydro-4-deoxy-D-glucarate + H(+) = 2,5-dioxopentanoate + CO2 + H2O. It functions in the pathway carbohydrate acid metabolism; D-glucarate degradation; 2,5-dioxopentanoate from D-glucarate: step 2/2. This Xanthomonas campestris pv. campestris (strain 8004) protein is Probable 5-dehydro-4-deoxyglucarate dehydratase.